Reading from the N-terminus, the 5381-residue chain is Protein purity of essence (5381 aa).

Disordered regions lie at residues 140–174 (KHPESSNKSIMSMAGSTTGGAGAGGSNDKESPKLE), 339–364 (QQQTAAAASTSQGSGGGLSSVQTSKD), 599–621 (SPETHDDNANTSSQERSGEQKSA), 683–709 (RNDSEQQSPPSTAAAVAAATGAGSSGS), 1162–1212 (SGGD…STET), and 1632–1659 (QAAQPNPSEESSQACDHSEGGEQRQSER). The span at 339-350 (QQQTAAAASTSQ) shows a compositional bias: low complexity. Low complexity-rich tracts occupy residues 690 to 709 (SPPSTAAAVAAATGAGSSGS) and 1167 to 1176 (SSCTSAASSS). Polar residues predominate over residues 1632–1646 (QAAQPNPSEESSQAC). Residues 1647 to 1658 (DHSEGGEQRQSE) are compositionally biased toward basic and acidic residues. The UBR-type zinc finger occupies 1815–1884 (KLCTFSQTQK…EDGSCQALSR (70 aa)). Disordered stretches follow at residues 1917–1939 (KRSNTAPGATQQQHGAPARKDSI), 2443–2479 (KNTTNNPQGKSKGGGSAAAGKLLHRKASSQQHQKQLT), 2632–2652 (PDDSEDVPAPSSGPTPVTATQ), 3037–3143 (VSAG…DNNE), 3537–3562 (KQQQQQQQPPPAVVSASSKLRSDREK), and 4247–4280 (HHQQDAPAGTKPKSSKQQQSAGTETPPRKSKEAA). Composition is skewed to polar residues over residues 1920–1930 (NTAPGATQQQH), 2470–2479 (SSQQHQKQLT), 2643–2652 (SGPTPVTATQ), and 3048–3058 (NVATDGSTLRT). The span at 3065-3075 (GSGGSESGGSG) shows a compositional bias: gly residues. Over residues 3084 to 3104 (ARSSNFGDHPNTTPPRQSCSS) the composition is skewed to polar residues. Positions 3119 to 3132 (SGSGGSASVPGGGL) are enriched in gly residues. The tract at residues 4904–5374 (PSLKYILRFL…SFIEDLLASL (471 aa)) is UBR4 E3 catalytic module. A HemiRING-type zinc finger spans residues 5022–5136 (GLTCFICREG…SSYMQESTQR (115 aa)). Residues C5025, C5028, H5074, and C5077 each coordinate Zn(2+). In terms of domain architecture, UZI spans 5139–5374 (ISYTSSIHDL…SFIEDLLASL (236 aa)).

This sequence belongs to the UBR4 family.

Functionally, has a role in growth of the perineurial glial layer of the larval peripheral nerve. May have a role in male fertility and eye development or function. May bind calmodulin. The polypeptide is Protein purity of essence (Drosophila pseudoobscura pseudoobscura (Fruit fly)).